The primary structure comprises 273 residues: 4-hydroxy-tetrahydrodipicolinate reductase (273 aa).

12–17 (GAGGRM) provides a ligand contact to NAD(+). Arginine 39 provides a ligand contact to NADP(+). NAD(+) is bound by residues 102 to 104 (GTT) and 126 to 129 (AANF). Catalysis depends on histidine 159, which acts as the Proton donor/acceptor. (S)-2,3,4,5-tetrahydrodipicolinate is bound at residue histidine 160. Lysine 163 acts as the Proton donor in catalysis. Position 169–170 (169–170 (GT)) interacts with (S)-2,3,4,5-tetrahydrodipicolinate.

It belongs to the DapB family. Homotetramer.

The protein resides in the cytoplasm. It carries out the reaction (S)-2,3,4,5-tetrahydrodipicolinate + NAD(+) + H2O = (2S,4S)-4-hydroxy-2,3,4,5-tetrahydrodipicolinate + NADH + H(+). It catalyses the reaction (S)-2,3,4,5-tetrahydrodipicolinate + NADP(+) + H2O = (2S,4S)-4-hydroxy-2,3,4,5-tetrahydrodipicolinate + NADPH + H(+). The protein operates within amino-acid biosynthesis; L-lysine biosynthesis via DAP pathway; (S)-tetrahydrodipicolinate from L-aspartate: step 4/4. Its function is as follows. Catalyzes the conversion of 4-hydroxy-tetrahydrodipicolinate (HTPA) to tetrahydrodipicolinate. The sequence is that of 4-hydroxy-tetrahydrodipicolinate reductase from Sodalis glossinidius (strain morsitans).